Here is a 252-residue protein sequence, read N- to C-terminus: Hydroxyacylglutathione hydrolase (252 aa).

The Zn(2+) site is built by histidine 54, histidine 56, aspartate 58, histidine 59, histidine 111, aspartate 128, and histidine 166.

This sequence belongs to the metallo-beta-lactamase superfamily. Glyoxalase II family. In terms of assembly, monomer. Zn(2+) is required as a cofactor.

It carries out the reaction an S-(2-hydroxyacyl)glutathione + H2O = a 2-hydroxy carboxylate + glutathione + H(+). It functions in the pathway secondary metabolite metabolism; methylglyoxal degradation; (R)-lactate from methylglyoxal: step 2/2. Functionally, thiolesterase that catalyzes the hydrolysis of S-D-lactoyl-glutathione to form glutathione and D-lactic acid. This is Hydroxyacylglutathione hydrolase from Vibrio parahaemolyticus serotype O3:K6 (strain RIMD 2210633).